Consider the following 249-residue polypeptide: 3alpha-hydroxy bile acid-CoA-ester 3-dehydrogenase 2 (249 aa).

NAD(+)-binding positions include threonine 15–isoleucine 18, glutamate 38, glutamate 42, and asparagine 92. Serine 144 contributes to the substrate binding site. Catalysis depends on proton donor/acceptor residues tyrosine 157 and lysine 161. Residues lysine 161 and valine 190–threonine 192 contribute to the NAD(+) site.

The protein belongs to the short-chain dehydrogenases/reductases (SDR) family. As to quaternary structure, homotetramer.

The enzyme catalyses a 3alpha-hydroxy bile acid CoA + NAD(+) = a 3-oxo bile acid CoA + NADH + H(+). The catalysed reaction is choloyl-CoA + NAD(+) = 7alpha,12alpha-dihydroxy-3-oxochol-24-oyl-CoA + NADH + H(+). It catalyses the reaction chenodeoxycholoyl-CoA + NAD(+) = 7alpha-hydroxy-3-oxochol-24-oyl-CoA + NADH + H(+). It carries out the reaction deoxycholoyl-CoA + NAD(+) = 12alpha-hydroxy-3-oxocholan-24-oyl-CoA + NADH + H(+). The enzyme catalyses lithocholoyl-CoA + NAD(+) = 3-oxocholan-24-oyl-CoA + NADH + H(+). It functions in the pathway lipid metabolism; bile acid biosynthesis. In terms of biological role, involved in the multi-step bile acid 7alpha-dehydroxylation pathway that transforms primary bile acids to secondary bile acids in the human gut. Catalyzes the oxidation of C3-hydroxyl group of CoA conjugated bile acids generating a C3-oxo bile acid intermediate. Can use choloyl-CoA, chenodeoxycholoyl-CoA, deoxycholoyl-CoA, and lithocholoyl-CoA as substrates with similar efficiency. Highly prefers NAD over NADP as cosubstrate. Also catalyzes the reverse reactions; in vitro, the preferred direction of reaction depends on the pH. Has very little activity with unconjugated (non-CoA) bile acid substrates. In Clostridium scindens (strain JCM 10418 / VPI 12708), this protein is 3alpha-hydroxy bile acid-CoA-ester 3-dehydrogenase 2 (baiA2).